Reading from the N-terminus, the 419-residue chain is Fumarylacetoacetase (419 aa).

S2 carries the post-translational modification N-acetylserine. Residue S92 is modified to Phosphoserine. Residue D126 coordinates Ca(2+). Y128 is a substrate binding site. H133 functions as the Proton acceptor in the catalytic mechanism. A substrate-binding site is contributed by R142. E199, E201, and D233 together coordinate Ca(2+). A Mg(2+)-binding site is contributed by D233. Substrate-binding residues include Q240 and Y244. The Mg(2+) site is built by K253 and T257. Residue S309 is modified to Phosphoserine. T350 serves as a coordination point for substrate. Position 395 is a phosphotyrosine (Y395).

This sequence belongs to the FAH family. As to quaternary structure, homodimer. Ca(2+) is required as a cofactor. Requires Mg(2+) as cofactor. In terms of tissue distribution, mainly expressed in liver and kidney. Lower levels are also detected in many other tissues.

It carries out the reaction 4-fumarylacetoacetate + H2O = acetoacetate + fumarate + H(+). It functions in the pathway amino-acid degradation; L-phenylalanine degradation; acetoacetate and fumarate from L-phenylalanine: step 6/6. The polypeptide is Fumarylacetoacetase (FAH) (Homo sapiens (Human)).